The following is a 369-amino-acid chain: Beta-1,4-galactosyltransferase 2 (369 aa).

Topologically, residues 1-15 are cytoplasmic; sequence MSRLLGGTLERVCKA. The helical; Signal-anchor for type II membrane protein transmembrane segment at 16–36 threads the bilayer; the sequence is VLLLCLLHFLVAVILYFDVYA. Residues 37–369 are Lumenal-facing; sequence QHLAFFSRFS…GQPMSWLTQG (333 aa). A compositionally biased stretch (polar residues) spans 58–73; the sequence is ASSSTNCSRPNATAAS. The segment at 58 to 90 is disordered; it reads ASSSTNCSRPNATAASSGLPEVPSARPGPTAPV. Asn-63 and Asn-68 each carry an N-linked (GlcNAc...) asparagine glycan. Cysteines 94 and 136 form a disulfide. UDP-alpha-D-galactose-binding positions include 147–151, 186–188, 214–215, and Trp-275; these read PFRHR, FNR, and VD. An intrachain disulfide couples Cys-208 to Cys-227. Residue Asp-215 participates in Mn(2+) binding. 277-280 serves as a coordination point for N-acetyl-D-glucosamine; sequence GEDD. Residue His-308 coordinates Mn(2+). A UDP-alpha-D-galactose-binding site is contributed by 308 to 310; it reads HDR. N-acetyl-D-glucosamine is bound at residue Arg-320. Asn-354 is a glycosylation site (N-linked (GlcNAc...) asparagine).

Belongs to the glycosyltransferase 7 family. Requires Mn(2+) as cofactor.

It is found in the golgi apparatus. It localises to the golgi stack membrane. It carries out the reaction D-glucose + UDP-alpha-D-galactose = lactose + UDP + H(+). The enzyme catalyses an N-acetyl-beta-D-glucosaminyl derivative + UDP-alpha-D-galactose = a beta-D-galactosyl-(1-&gt;4)-N-acetyl-beta-D-glucosaminyl derivative + UDP + H(+). The catalysed reaction is N-acetyl-D-glucosamine + UDP-alpha-D-galactose = beta-D-galactosyl-(1-&gt;4)-N-acetyl-D-glucosamine + UDP + H(+). It functions in the pathway protein modification; protein glycosylation. Its function is as follows. Responsible for the synthesis of complex-type N-linked oligosaccharides in many glycoproteins as well as the carbohydrate moieties of glycolipids. Can produce lactose. The chain is Beta-1,4-galactosyltransferase 2 from Mus musculus (Mouse).